The following is a 138-amino-acid chain: Aspartate 1-decarboxylase (138 aa).

Ser25 acts as the Schiff-base intermediate with substrate; via pyruvic acid in catalysis. Position 25 is a pyruvic acid (Ser) (Ser25). Thr57 is a binding site for substrate. Residue Tyr58 is the Proton donor of the active site. 73–75 is a binding site for substrate; it reads GAA. Residues 117-138 form a disordered region; that stretch reads VDADPTAPPAPGLERSPLAEPV.

It belongs to the PanD family. As to quaternary structure, heterooctamer of four alpha and four beta subunits. It depends on pyruvate as a cofactor. Post-translationally, is synthesized initially as an inactive proenzyme, which is activated by self-cleavage at a specific serine bond to produce a beta-subunit with a hydroxyl group at its C-terminus and an alpha-subunit with a pyruvoyl group at its N-terminus.

It is found in the cytoplasm. It catalyses the reaction L-aspartate + H(+) = beta-alanine + CO2. It participates in cofactor biosynthesis; (R)-pantothenate biosynthesis; beta-alanine from L-aspartate: step 1/1. Functionally, catalyzes the pyruvoyl-dependent decarboxylation of aspartate to produce beta-alanine. The chain is Aspartate 1-decarboxylase from Clavibacter michiganensis subsp. michiganensis (strain NCPPB 382).